A 344-amino-acid polypeptide reads, in one-letter code: Ribosomal RNA small subunit methyltransferase H 2 (344 aa).

S-adenosyl-L-methionine is bound by residues 78 to 80, Asp98, Phe131, Asp145, and Gln152; that span reads GGH.

It belongs to the methyltransferase superfamily. RsmH family.

It is found in the cytoplasm. The catalysed reaction is cytidine(1402) in 16S rRNA + S-adenosyl-L-methionine = N(4)-methylcytidine(1402) in 16S rRNA + S-adenosyl-L-homocysteine + H(+). In terms of biological role, specifically methylates the N4 position of cytidine in position 1402 (C1402) of 16S rRNA. This is Ribosomal RNA small subunit methyltransferase H 2 from Acholeplasma laidlawii (strain PG-8A).